The primary structure comprises 130 residues: Small ribosomal subunit protein uS9 (130 aa).

A disordered region spans residues 98-130; it reads LKKAGMLTRDPRMKERKKYGLKKARKASQFSKR. The segment covering 111–130 has biased composition (basic residues); sequence KERKKYGLKKARKASQFSKR.

This sequence belongs to the universal ribosomal protein uS9 family.

This Lacticaseibacillus casei (strain BL23) (Lactobacillus casei) protein is Small ribosomal subunit protein uS9.